We begin with the raw amino-acid sequence, 377 residues long: uncharacterized protein (377 aa).

Disordered stretches follow at residues 10 to 79 (YSDG…NVNN), 91 to 141 (KKNN…DKEE), 182 to 257 (EAKK…TTTT), 265 to 284 (ENEN…EPIE), and 289 to 326 (LEFN…KEEP). 3 stretches are compositionally biased toward low complexity: residues 14-24 (IPQPTITPPTQ), 46-79 (NKNN…NVNN), and 93-124 (NNNN…FNDN). 2 stretches are compositionally biased toward basic and acidic residues: residues 182-196 (EAKK…KRGE) and 209-218 (QTPDKKKKLE). The segment covering 221-257 (TSKNNNKSSTTKTELTNTTTNTSSTTNPTTDTTTTTT) has biased composition (low complexity). Composition is skewed to basic and acidic residues over residues 265–274 (ENENQEKENN) and 292–303 (NKFEEKPIKEVK). Over residues 311–320 (KRNKKRNNPK) the composition is skewed to basic residues.

This is an uncharacterized protein from Dictyostelium discoideum (Social amoeba).